Reading from the N-terminus, the 118-residue chain is MAIIIPKVKTNGRIKMRIRKGDIIQVISGKDKGKIGEVLRTLPNENRLIVEGVNLRTRHVKPTSGGESGRIVTKEAYLHASNVMAYSTENKVASRIEIMVDSDGNRKRRLKKTGEILA.

It belongs to the universal ribosomal protein uL24 family. Part of the 50S ribosomal subunit.

It localises to the plastid. The protein resides in the organellar chromatophore. One of two assembly initiator proteins, it binds directly to the 5'-end of the 23S rRNA, where it nucleates assembly of the 50S subunit. This Paulinella chromatophora protein is Large ribosomal subunit protein uL24c (rpl24).